The primary structure comprises 73 residues: Dermaseptin-H4 (73 aa).

Residues 1-22 form the signal peptide; sequence MAFMKKSLFLVLFLGMVSLSIC. A propeptide spanning residues 23–43 is cleaved from the precursor; sequence EEEKRENEDEAKQEDDEQSEM. Residues 25–45 are disordered; the sequence is EKRENEDEAKQEDDEQSEMKR. A compositionally biased stretch (acidic residues) spans 30-40; that stretch reads EDEAKQEDDEQ. Leu70 bears the Leucine amide mark. Residues 72–73 constitute a propeptide that is removed on maturation; it reads EQ.

Expressed by the skin glands.

The protein localises to the secreted. Has antibacterial activity against the Gram-negative bacteria E.coli ATCC 11775 (MIC=0.8 uM), and the Gram-positive bacteria S.aureus ATCC 12600 (MIC=0.4 uM) and M.luteus ATCC 49732 (MIC=0.8 uM). Does not inhibit the growth of the fungus C.albicans. Probably acts by disturbing membrane functions with its amphipathic structure. This is Dermaseptin-H4 from Pithecopus azureus (Orange-legged monkey tree frog).